We begin with the raw amino-acid sequence, 451 residues long: Enolase (451 aa).

Glutamine 163 lines the (2R)-2-phosphoglycerate pocket. The Proton donor role is filled by glutamate 205. Positions 258, 308, and 335 each coordinate Mg(2+). 4 residues coordinate (2R)-2-phosphoglycerate: lysine 360, arginine 389, serine 390, and lysine 411. Lysine 360 serves as the catalytic Proton acceptor.

This sequence belongs to the enolase family. Mg(2+) serves as cofactor.

The protein resides in the cytoplasm. The protein localises to the secreted. It localises to the cell surface. It carries out the reaction (2R)-2-phosphoglycerate = phosphoenolpyruvate + H2O. It functions in the pathway carbohydrate degradation; glycolysis; pyruvate from D-glyceraldehyde 3-phosphate: step 4/5. Its function is as follows. Catalyzes the reversible conversion of 2-phosphoglycerate (2-PG) into phosphoenolpyruvate (PEP). It is essential for the degradation of carbohydrates via glycolysis. The protein is Enolase of Mycoplasma mycoides subsp. mycoides SC (strain CCUG 32753 / NCTC 10114 / PG1).